The primary structure comprises 373 residues: Glutamine synthetase (373 aa).

N-acetylalanine is present on A2. Residues 2–25 are required for glutamine-induced ubiquitination by CRL4(CRBN) and proteasomal degradation; that stretch reads ATSASSHLNKGIKQMYMSLPQGEK. 2 positions are modified to N6-acetyllysine: K11 and K14. Residues 24 to 106 enclose the GS beta-grasp domain; sequence EKVQAMYIWV…VLCEVFKYNR (83 aa). A Phosphotyrosine modification is found at Y104. The 261-residue stretch at 113 to 373 folds into the GS catalytic domain; sequence LRHICKRIMD…TGDEPFQYKN (261 aa). E134 serves as a coordination point for ATP. Residues E134, E136, E196, and E203 each contribute to the Mn(2+) site. 203–208 contributes to the ATP binding site; sequence EFQIGP. 246-247 provides a ligand contact to L-glutamate; the sequence is NW. Position 253 (H253) interacts with Mn(2+). ATP is bound by residues 255–257, R319, and R324; that span reads NFS. L-glutamate is bound at residue R319. 336–338 contacts ADP; the sequence is YFE. A Mn(2+)-binding site is contributed by E338. An L-glutamate-binding site is contributed by R340. Phosphoserine is present on S343.

Belongs to the glutamine synthetase family. In terms of assembly, decamer; composed of two pentamers. Interacts with PALMD. Interacts with RHOJ. Interacts with BEST2; this interaction tethers a fraction of GLUL to the membrane, causing a decrease of cytosolic glutamine synthase (GS) activity and inhibits the chloride channel activity of BEST2 by affecting the gating at the aperture in the absence of intracellular glutamate. Mg(2+) is required as a cofactor. Requires Mn(2+) as cofactor. In terms of processing, acetylated by EP300/p300; acetylation is stimulated by increased glutamine levels and promotes ubiquitin-mediated proteasomal degradation. Post-translationally, palmitoylated; undergoes autopalmitoylation. Ubiquitinated by ZNRF1. Ubiquitinated by the DCX (DDB1-CUL4-X-box) E3 ubiquitin-protein ligase complex called CRL4(CRBN), leading to proteasomal degradation. In terms of tissue distribution, expressed in microvascular endothelial cells.

It localises to the cytoplasm. The protein localises to the cytosol. It is found in the microsome. The protein resides in the mitochondrion. Its subcellular location is the cell membrane. The enzyme catalyses L-glutamate + NH4(+) + ATP = L-glutamine + ADP + phosphate + H(+). It carries out the reaction L-cysteinyl-[protein] + hexadecanoyl-CoA = S-hexadecanoyl-L-cysteinyl-[protein] + CoA. Its activity is regulated as follows. Glutamine synthetase activity is inhibited by methionine sulfoximine (MSO). In terms of biological role, glutamine synthetase that catalyzes the ATP-dependent conversion of glutamate and ammonia to glutamine. Its role depends on tissue localization: in the brain, it regulates the levels of toxic ammonia and converts neurotoxic glutamate to harmless glutamine, whereas in the liver, it is one of the enzymes responsible for the removal of ammonia. Plays a key role in ammonium detoxification during erythropoiesis: the glutamine synthetase activity is required to remove ammonium generated by porphobilinogen deaminase (HMBS) during heme biosynthesis to prevent ammonium accumulation and oxidative stress. Essential for proliferation of fetal skin fibroblasts. Independently of its glutamine synthetase activity, required for endothelial cell migration during vascular development. Involved in angiogenesis by regulating membrane localization and activation of the GTPase RHOJ, possibly by promoting RHOJ palmitoylation. May act as a palmitoyltransferase for RHOJ: able to autopalmitoylate and then transfer the palmitoyl group to RHOJ. Plays a role in ribosomal 40S subunit biogenesis. Through the interaction with BEST2, inhibits BEST2 channel activity by affecting the gating at the aperture in the absence of intracellular L-glutamate, but sensitizes BEST2 to intracellular L-glutamate, which promotes the opening of BEST2 and thus relieves its inhibitory effect on BEST2. The polypeptide is Glutamine synthetase (Mus musculus (Mouse)).